The primary structure comprises 350 residues: Sulfate-binding protein (350 aa).

The signal sequence occupies residues 1 to 40 (MKTAWTRRSFLQSAALATATVITIAACGGNNQSSSGGSGQ).

It belongs to the prokaryotic sulfate-binding protein family.

The protein resides in the periplasm. In terms of biological role, this protein specifically binds sulfate and is involved in its transmembrane transport. This is Sulfate-binding protein (sbpA) from Synechococcus elongatus (strain ATCC 33912 / PCC 7942 / FACHB-805) (Anacystis nidulans R2).